The following is a 1074-amino-acid chain: Topoisomerase 1-associated factor 1 (1074 aa).

Disordered stretches follow at residues 572–595 and 936–1074; these read NTHK…QRKI and EEPP…DRET. Composition is skewed to basic residues over residues 948-962 and 978-991; these read LLRR…RRRS and GHQH…KRAK. Positions 1014 to 1031 are enriched in basic and acidic residues; that stretch reads EATRRFFENEERLRREMD. Over residues 1046-1055 the composition is skewed to basic residues; it reads VKRKRGKKNG.

Belongs to the timeless family.

The protein resides in the nucleus. Functionally, involved in chromosome segregation during meiosis and DNA damage repair. The chain is Topoisomerase 1-associated factor 1 (TOF1) from Cryptococcus neoformans var. neoformans serotype D (strain JEC21 / ATCC MYA-565) (Filobasidiella neoformans).